Consider the following 83-residue polypeptide: MAIKERIGVVVSDKMDKTVVVAVSNRVPHKKYGKIVGQTRRYKAHDEENACHVGDRVRIRESRPLSRTKRWAVTDVLVAANRP.

This sequence belongs to the universal ribosomal protein uS17 family. In terms of assembly, part of the 30S ribosomal subunit.

In terms of biological role, one of the primary rRNA binding proteins, it binds specifically to the 5'-end of 16S ribosomal RNA. This Acaryochloris marina (strain MBIC 11017) protein is Small ribosomal subunit protein uS17.